Reading from the N-terminus, the 949-residue chain is UvrABC system protein A (949 aa).

An ATP-binding site is contributed by 42–49 (GLSGSGKS). Residues 262-289 (CPVCSYSLPELEPRLFSFNNPMGSCPTC) form a C4-type zinc finger. 2 ABC transporter domains span residues 319-596 (WDKR…ENSV) and 616-945 (VNPD…KYLK). ATP is bound at residue 649-656 (GVSGSGKS). The C4-type zinc-finger motif lies at 748-774 (CEACQGDGVIKVEMHFLPDVYVPCEVC).

This sequence belongs to the ABC transporter superfamily. UvrA family. As to quaternary structure, forms a heterotetramer with UvrB during the search for lesions.

Its subcellular location is the cytoplasm. Functionally, the UvrABC repair system catalyzes the recognition and processing of DNA lesions. UvrA is an ATPase and a DNA-binding protein. A damage recognition complex composed of 2 UvrA and 2 UvrB subunits scans DNA for abnormalities. When the presence of a lesion has been verified by UvrB, the UvrA molecules dissociate. The chain is UvrABC system protein A from Neisseria meningitidis serogroup B (strain ATCC BAA-335 / MC58).